The primary structure comprises 337 residues: Perakine reductase (337 aa).

The active-site Proton donor is the tyrosine 57. A substrate-binding site is contributed by histidine 126. Position 205–214 (205–214 (SPIGRGLFAG)) interacts with NADP(+).

This sequence belongs to the aldo/keto reductase family.

The enzyme catalyses raucaffrinoline + NADP(+) = perakine + NADPH + H(+). Aldo-keto reductase involved in the biosynthesis of monoterpenoid indole alkaloids. Broad substrate specificity enzyme with a high selectivity in the group of alkaloids. Can use perakine, 19(S),20(R)-dihydro-peraksine-17,21-al, cinnamic aldehyde, p-coumaric aldehyde and 3-(3,4,5-trimethoxyphenyl)propanal as substrates, but not ketosteroids such as progesterone. NADPH could not be replaced by NADH. In Rauvolfia serpentina (Serpentine wood), this protein is Perakine reductase (PR).